The chain runs to 170 residues: FMRFamide-like neuropeptides 6 (170 aa).

The first 19 residues, 1–19 (MNSRGLILTLGVVIAVAFA), serve as a signal peptide directing secretion. Q20 bears the Pyrrolidone carboxylic acid mark. F39 is subject to Phenylalanine amide. A propeptide spanning residues 42 to 51 (SDGGNPMEME) is cleaved from the precursor. F60 is modified (phenylalanine amide). The propeptide occupies 63–81 (RSSGGDEQELVGGDDIDME). Position 90 is a phenylalanine amide (F90). The propeptide occupies 93-104 (RSGPQEDDMPME). F113 is modified (phenylalanine amide). Residues 116-136 (RSSDMEVIGNEGVDGDAHDLF) constitute a propeptide that is removed on maturation. The residue at position 145 (F145) is a Phenylalanine amide. Residues 148-159 (RSMGEEEDHDMM) constitute a propeptide that is removed on maturation. The interval 150-170 (MGEEEDHDMMKRKSAYMRFGR) is disordered. Positions 159–170 (MKRKSAYMRFGR) are enriched in basic residues. F168 is subject to Phenylalanine amide.

It belongs to the FARP (FMRFamide related peptide) family. As to expression, each flp gene is expressed in a distinct set of neurons. Flp-6 is expressed in the ASE sensory neurons, AFD, ASG, PVT and I1 neurons.

The protein localises to the secreted. Its function is as follows. FMRFamides and FMRFamide-like peptides are neuropeptides. KSAYMRF-amide has an excitatory effect on dissected pharyngeal myogenic muscle system. This chain is FMRFamide-like neuropeptides 6, found in Caenorhabditis elegans.